A 213-amino-acid chain; its full sequence is Glycerol-3-phosphate acyltransferase (213 aa).

A run of 6 helical transmembrane segments spans residues isoleucine 2–isoleucine 22, alanine 52–phenylalanine 74, proline 81–phenylalanine 100, valine 112–leucine 132, valine 143–leucine 163, and serine 164–arginine 184.

The protein belongs to the PlsY family. Probably interacts with PlsX.

It localises to the cell membrane. The enzyme catalyses an acyl phosphate + sn-glycerol 3-phosphate = a 1-acyl-sn-glycero-3-phosphate + phosphate. It participates in lipid metabolism; phospholipid metabolism. Functionally, catalyzes the transfer of an acyl group from acyl-phosphate (acyl-PO(4)) to glycerol-3-phosphate (G3P) to form lysophosphatidic acid (LPA). This enzyme utilizes acyl-phosphate as fatty acyl donor, but not acyl-CoA or acyl-ACP. This chain is Glycerol-3-phosphate acyltransferase, found in Streptococcus pneumoniae (strain Hungary19A-6).